The primary structure comprises 322 residues: Exosome complex component RRP4 homolog (322 aa).

Positions 94 to 172 constitute an S1 motif domain; the sequence is GDIVVGRVIE…HDGSLQLQAR (79 aa). Positions 182–237 constitute a KH domain; the sequence is GQLLKVDPYLVKRSKHHFHYVESLGIDLIIGCNGFIWVGEHVEVRDPMAIDDQKDE.

It belongs to the RRP4 family. In terms of assembly, component of the RNA exosome complex. Interacts with RPP41. Expressed in roots, stems, rosette and cauline leaves, flowers and siliques.

It localises to the cytoplasm. The protein resides in the nucleus. The protein localises to the nucleolus. In terms of biological role, non-catalytic component of the RNA exosome complex which has 3'-&gt;5' exoribonuclease activity and participates in a multitude of cellular RNA processing, maturation and degradation events. In vitro, is an active and distributive 3'-&gt;5' exonuclease requiring a free 3'-OH on the substrate and releasing nucleoside 5'-monophosphates. Required for normal embryo development. The protein is Exosome complex component RRP4 homolog of Arabidopsis thaliana (Mouse-ear cress).